Here is a 653-residue protein sequence, read N- to C-terminus: Macrolide export ATP-binding/permease protein MacB (653 aa).

The ABC transporter domain maps to 6–244 (LQLTRVTRRF…DAAPDASGGA (239 aa)). Residue 42 to 49 (GASGSGKS) participates in ATP binding. Helical transmembrane passes span 278-298 (LLTM…VAIG), 526-546 (LTLL…IGVM), 587-607 (MGGA…SLFV), and 616-636 (AASI…FGFM).

The protein belongs to the ABC transporter superfamily. Macrolide exporter (TC 3.A.1.122) family. Homodimer.

The protein localises to the cell inner membrane. Its function is as follows. Non-canonical ABC transporter that contains transmembrane domains (TMD), which form a pore in the inner membrane, and an ATP-binding domain (NBD), which is responsible for energy generation. Confers resistance against macrolides. The protein is Macrolide export ATP-binding/permease protein MacB of Burkholderia pseudomallei (strain 1710b).